The chain runs to 224 residues: Probable septum site-determining protein MinC (224 aa).

This sequence belongs to the MinC family. In terms of assembly, interacts with MinD and FtsZ.

Its function is as follows. Cell division inhibitor that blocks the formation of polar Z ring septums. Rapidly oscillates between the poles of the cell to destabilize FtsZ filaments that have formed before they mature into polar Z rings. Prevents FtsZ polymerization. This Shewanella amazonensis (strain ATCC BAA-1098 / SB2B) protein is Probable septum site-determining protein MinC.